The following is a 336-amino-acid chain: Corrinoid adenosyltransferase PduO (336 aa).

The segment at 1-185 is pduON; it reads MAIYTRTGDA…IIREVSKRYL (185 aa). Residues 194-336 form a pduOC region; that stretch reads KETTPVALSF…IAAINVGTHQ (143 aa). Position 207 (H207) interacts with heme. Residues E215 and Q218 each coordinate Mg(2+).

This sequence belongs to the Cob(I)alamin adenosyltransferase family. PduO subfamily. As to quaternary structure, the C-terminal domain (PduOC) forms stable octamers and also crystallizes as an octamer. Forms a complex with PduS. It depends on heme b as a cofactor. Requires Mg(2+) as cofactor.

The protein resides in the bacterial microcompartment. It catalyses the reaction cob(I)alamin-[corrinoid adenosyltransferase] + ATP = apo-[corrinoid adenosyltransferase] + adenosylcob(III)alamin + triphosphate. The protein operates within polyol metabolism; 1,2-propanediol degradation. It functions in the pathway cofactor biosynthesis; adenosylcobalamin biosynthesis. Inhibited by ADP but not significantly by other nucleotides, inhibited by diphosphate and less well by triphosphate. In terms of biological role, converts cob(I)alamin to adenosylcobalamin (adenosylcob(III)alamin), the cofactor for propanediol dehydratase. Found in the bacterial microcompartment (BMC) dedicated to 1,2-propanediol (1,2-PD) degradation. For adenosylcobalamin synthesis dATP can replace ATP, but no other nucleotides will substitute. PduS and PduO allow regeneration of the adenosylcobalamin cofactor within the BMC. Functionally, the 1,2-PD-specific bacterial microcompartment (BMC) concentrates low levels of 1,2-PD catabolic enzymes, concentrates volatile reaction intermediates thus enhancing pathway flux and keeps the level of toxic, mutagenic propionaldehyde low. In Salmonella typhimurium (strain LT2 / SGSC1412 / ATCC 700720), this protein is Corrinoid adenosyltransferase PduO.